The primary structure comprises 486 residues: MTTFYTVVNWLVILGYWLLIAGVTLRILMKRRAVPSAMAWLLIIYILPLVGIIAYLSFGELHLGKRRAERARAMWPSTAKWLNDLKACKHIFAEDNSPVAESLFKLCERRQGIGGVKGNQLQLLTESDDVMQALIRDIQLARHNIEMVFYIWQPGGMADSVAESLMAAARRGVHCRLMLDSAGSVAFFRSPWAAMMRNAGIEVVEALKVNLMRVFLRRMDLRQHRKMVMIDNYIAYTGSMNMVDPRYFKQDSGVGQWIDLMARMEGPVATSMGIVYSCDWEIETGKRILPPPPDVNIMPFEEASGHTIHTIASGPGFPEDLIHQALLTAAYAAKEHLIMTTPYFVPSDDLLHAICTAAQRGVDVSIILPRKNDSLLVGWASRAFFTELLAAGVKIYQFEGGLLHTKSVLVDGELSLVGTVNLDMRSLWLNFEITLVIDDAGFGSDLAAVQDDYISRSRLLDARRWLKRPLWQRIVERLFYFFSPLL.

2 helical membrane passes run 3 to 23 and 38 to 58; these read TFYTVVNWLVILGYWLLIAGV and MAWLLIIYILPLVGIIAYLSF. PLD phosphodiesterase domains lie at 219 to 246 and 399 to 426; these read MDLRQHRKMVMIDNYIAYTGSMNMVDPR and EGGLLHTKSVLVDGELSLVGTVNLDMRS. Catalysis depends on residues H224, K226, D231, H404, K406, and D411.

This sequence belongs to the phospholipase D family. Cardiolipin synthase subfamily. ClsA sub-subfamily.

Its subcellular location is the cell inner membrane. It catalyses the reaction 2 a 1,2-diacyl-sn-glycero-3-phospho-(1'-sn-glycerol) = a cardiolipin + glycerol. Functionally, catalyzes the reversible phosphatidyl group transfer from one phosphatidylglycerol molecule to another to form cardiolipin (CL) (diphosphatidylglycerol) and glycerol. This chain is Cardiolipin synthase A, found in Klebsiella pneumoniae (strain 342).